A 327-amino-acid polypeptide reads, in one-letter code: Nuclear apoptosis-inducing factor 1 (327 aa).

Residues Met1–Lys70 are required for nuclear localization and apoptosis-inducing activity. Residues Arg87–Pro98 are compositionally biased toward low complexity. Disordered stretches follow at residues Arg87–Pro118 and Asn303–Gln327. The span at Ala104 to Pro118 shows a compositional bias: gly residues. Over residues Val316–Gln327 the composition is skewed to polar residues.

It belongs to the NAIF1 family. In terms of assembly, interacts with HARBI1. As to expression, widely expressed.

Its subcellular location is the nucleus. Its function is as follows. Induces apoptosis. This Homo sapiens (Human) protein is Nuclear apoptosis-inducing factor 1 (NAIF1).